The chain runs to 325 residues: Biotin synthase (325 aa).

Positions Phe-51–Arg-280 constitute a Radical SAM core domain. The [4Fe-4S] cluster site is built by Cys-69, Cys-73, and Cys-76. Residues Ser-113, Cys-145, Cys-205, and Arg-275 each coordinate [2Fe-2S] cluster.

This sequence belongs to the radical SAM superfamily. Biotin synthase family. In terms of assembly, homodimer. [4Fe-4S] cluster serves as cofactor. [2Fe-2S] cluster is required as a cofactor.

It catalyses the reaction (4R,5S)-dethiobiotin + (sulfur carrier)-SH + 2 reduced [2Fe-2S]-[ferredoxin] + 2 S-adenosyl-L-methionine = (sulfur carrier)-H + biotin + 2 5'-deoxyadenosine + 2 L-methionine + 2 oxidized [2Fe-2S]-[ferredoxin]. Its pathway is cofactor biosynthesis; biotin biosynthesis; biotin from 7,8-diaminononanoate: step 2/2. In terms of biological role, catalyzes the conversion of dethiobiotin (DTB) to biotin by the insertion of a sulfur atom into dethiobiotin via a radical-based mechanism. This Clostridioides difficile (strain 630) (Peptoclostridium difficile) protein is Biotin synthase.